Here is an 804-residue protein sequence, read N- to C-terminus: Protein SEY1 homolog 1 (804 aa).

Over 1–638 (MEQIITGEGQ…SVLASQNNEH (638 aa)) the chain is Cytoplasmic. The region spanning 28-245 (GTDYHMVSII…EENYLFKEKS (218 aa)) is the GB1/RHD3-type G domain. 38-45 (GCQSSGKS) contacts GTP. A helical membrane pass occupies residues 639-659 (IPPWAWFLFLFSCSDYILWWL). Over 660–662 (SNP) the chain is Lumenal. The helical transmembrane segment at 663-683 (LLFSLTVLFGGTYLVLNQLGL) threads the bilayer. The Cytoplasmic segment spans residues 684–804 (WDTAVQKLLD…RKRVRVGTLV (121 aa)). Residues 706–804 (PDENNETETN…RKRVRVGTLV (99 aa)) form a disordered region. Residues 751-791 (QGLTKTESNVTFANVSNANDEQSLTKNNTEDSLNTGSSSSG) are compositionally biased toward polar residues. Residues 792-804 (QRHRKRVRVGTLV) show a composition bias toward basic residues.

It belongs to the TRAFAC class dynamin-like GTPase superfamily. GB1/RHD3 GTPase family. RHD3 subfamily.

Its subcellular location is the endoplasmic reticulum membrane. In terms of biological role, probable GTP-binding protein that may be involved in cell development. In Trichomonas vaginalis (strain ATCC PRA-98 / G3), this protein is Protein SEY1 homolog 1.